The primary structure comprises 338 residues: Glycerol-3-phosphate dehydrogenase [NAD(P)+] (338 aa).

Residues Ser-14, Tyr-15, His-35, and Lys-109 each coordinate NADPH. Residues Lys-109, Gly-138, and Thr-140 each contribute to the sn-glycerol 3-phosphate site. Ala-142 is an NADPH binding site. Sn-glycerol 3-phosphate is bound by residues Lys-194, Asp-247, Ser-257, Arg-258, and Asn-259. The active-site Proton acceptor is Lys-194. Arg-258 is an NADPH binding site. Residues Val-282 and Glu-284 each coordinate NADPH.

This sequence belongs to the NAD-dependent glycerol-3-phosphate dehydrogenase family.

Its subcellular location is the cytoplasm. It catalyses the reaction sn-glycerol 3-phosphate + NAD(+) = dihydroxyacetone phosphate + NADH + H(+). The catalysed reaction is sn-glycerol 3-phosphate + NADP(+) = dihydroxyacetone phosphate + NADPH + H(+). It functions in the pathway membrane lipid metabolism; glycerophospholipid metabolism. Functionally, catalyzes the reduction of the glycolytic intermediate dihydroxyacetone phosphate (DHAP) to sn-glycerol 3-phosphate (G3P), the key precursor for phospholipid synthesis. In Shewanella sp. (strain MR-4), this protein is Glycerol-3-phosphate dehydrogenase [NAD(P)+].